We begin with the raw amino-acid sequence, 414 residues long: NADH kinase POS5, mitochondrial (414 aa).

Belongs to the NAD kinase family.

The protein localises to the mitochondrion matrix. The catalysed reaction is NADH + ATP = ADP + NADPH + H(+). In terms of biological role, phosphorylates both NADH and NAD(+), with a twofold preference for NADH. Anti-oxidant factor and key source of the cellular reductant NADPH. In Saccharomyces cerevisiae (strain ATCC 204508 / S288c) (Baker's yeast), this protein is NADH kinase POS5, mitochondrial (POS5).